The primary structure comprises 121 residues: MHTLDTVDASSLRTDIPDFRPGDTLKVHVRVVEGNRSRVQVFQGVVIRRQGSGVRETFTVRKVSFGVGVERTFPVHTPVIEKIEVVTRGHVRRAKLYYLRDLRGKAAKIREKRENRETTEA.

This sequence belongs to the bacterial ribosomal protein bL19 family.

This protein is located at the 30S-50S ribosomal subunit interface and may play a role in the structure and function of the aminoacyl-tRNA binding site. The sequence is that of Large ribosomal subunit protein bL19 from Acidothermus cellulolyticus (strain ATCC 43068 / DSM 8971 / 11B).